A 188-amino-acid chain; its full sequence is MARLIWLTGASGSGKDTLLDALRQTEPVRLLVAHRYITRPAQAGGENHIALSEAEFAYRREHNLFALHWQAHQYQYGIGIEVDHWLSAGLDVVVNGSRSHHQQAQQRYGSRLLPVCLQVSAAVLAQRLRQRGREDEAQIALRLQRADAMDILPATCRRLNNDGPLAQTLQAFHTLLAAEKSDFWQISL.

The protein belongs to the ribose 1,5-bisphosphokinase family.

The catalysed reaction is alpha-D-ribose 1,5-bisphosphate + ATP = 5-phospho-alpha-D-ribose 1-diphosphate + ADP. It participates in metabolic intermediate biosynthesis; 5-phospho-alpha-D-ribose 1-diphosphate biosynthesis; 5-phospho-alpha-D-ribose 1-diphosphate from D-ribose 5-phosphate (route II): step 3/3. In terms of biological role, catalyzes the phosphorylation of ribose 1,5-bisphosphate to 5-phospho-D-ribosyl alpha-1-diphosphate (PRPP). In Dickeya zeae (strain Ech586) (Dickeya dadantii (strain Ech586)), this protein is Ribose 1,5-bisphosphate phosphokinase PhnN.